A 914-amino-acid chain; its full sequence is Serine/threonine kinase SAD-1 (914 aa).

Residues 47 to 298 (YKLEKTLGKG…LADVFKHPWV (252 aa)) form the Protein kinase domain. Residues 53–61 (LGKGQTGLV) and Lys76 contribute to the ATP site. Catalysis depends on Asp169, which acts as the Proton acceptor. 3 disordered regions span residues 375-551 (AQED…SPPS), 563-590 (TMNS…SGPW), and 757-914 (NSTQ…ADKV). Residues 393–402 (PPKKRTDSSR) are compositionally biased toward basic and acidic residues. Residues 444-462 (RSSTRDLFGSSSSGSYSAR) are compositionally biased toward low complexity. A compositionally biased stretch (polar residues) spans 473 to 482 (ASRSTNSYHY). Residues 495–526 (AARHVRDAQERRESRDSGRGSSRKESKDRSDK) show a composition bias toward basic and acidic residues. Composition is skewed to low complexity over residues 527-551 (SASS…SPPS) and 563-573 (TMNSTNSSTNS). Polar residues predominate over residues 574–590 (LIAGNSQTSIGSTSGPW). Over residues 780–796 (DSSVGSACSDSESNASS) the composition is skewed to low complexity. Residues 823-837 (SMRSVGSGTANSYKS) are compositionally biased toward polar residues. Residues 850-876 (ASSSSASNRYGPSSSSSGSYSNNADYS) show a composition bias toward low complexity. The segment covering 882 to 903 (SQRSNGSSAPKNQYSPGSQRSF) has biased composition (polar residues).

The protein belongs to the protein kinase superfamily. CAMK Ser/Thr protein kinase family. SNF1 subfamily. Interacts with strd-1 and nab-1. The cofactor is Mg(2+). Expressed in neurons. Colocalizes with strd-1 along the dorsal nerve cord.

The protein localises to the synapse. It catalyses the reaction L-seryl-[protein] + ATP = O-phospho-L-seryl-[protein] + ADP + H(+). It carries out the reaction L-threonyl-[protein] + ATP = O-phospho-L-threonyl-[protein] + ADP + H(+). Functionally, regulates both neuronal polarity and synaptic organization when bound to strd-1. Kinase activity is required for the establishment, but not the maintenance, of both processes. Binding to nab-1 is essential for role in restricting axonal fate during neuronal polarization but is not required for regulating synapse morphology. The protein is Serine/threonine kinase SAD-1 of Caenorhabditis elegans.